Reading from the N-terminus, the 461-residue chain is Argininosuccinate lyase (461 aa).

The protein belongs to the lyase 1 family. Argininosuccinate lyase subfamily.

It localises to the cytoplasm. It catalyses the reaction 2-(N(omega)-L-arginino)succinate = fumarate + L-arginine. It functions in the pathway amino-acid biosynthesis; L-arginine biosynthesis; L-arginine from L-ornithine and carbamoyl phosphate: step 3/3. The polypeptide is Argininosuccinate lyase (Chlorobium chlorochromatii (strain CaD3)).